Here is a 321-residue protein sequence, read N- to C-terminus: G-protein coupled receptor homolog ECRF3 (321 aa).

Residues 1–34 (MEVKLDFSSEDFSNYSYNYSGDIYYGDVAPCVVN) are Extracellular-facing. Residues Asn-14 and Asn-18 are each glycosylated (N-linked (GlcNAc...) asparagine; by host). The helical transmembrane segment at 35-51 (FLISESALAFIYVLMFL) threads the bilayer. Residues 52–76 (CNAIGNSLVLRTFLKYRAQAQSFDY) are Cytoplasmic-facing. Residues 77-93 (LMMGFCLNSLFLAGYLL) traverse the membrane as a helical segment. The Extracellular segment spans residues 94–124 (MRLLRMFEIFMNTELCKLEAFFLNLSIYWSP). N-linked (GlcNAc...) asparagine; by host glycosylation is present at Asn-117. A helical transmembrane segment spans residues 125–141 (FILVFISVLRCLLIFCA). Topologically, residues 142-149 (TRLWVKKT) are cytoplasmic. The chain crosses the membrane as a helical span at residues 150–166 (LIGQVFLCCSFVLACFG). Residues 167 to 196 (ALPHVMVTSYYEPSSCIEEDGVLTEQLRTK) are Extracellular-facing. The helical transmembrane segment at 197-215 (LNTFHTWYSFAGPLFITVI) threads the bilayer. Topologically, residues 216 to 234 (CYSMSCYKLFKTKLSKRAE) are cytoplasmic. A helical transmembrane segment spans residues 235–251 (VVTIITMTTLLFIVFCI). At 252–286 (PYYIMESIDTLLRVGVIEETCAKRSAIVYGIQCTY) the chain is on the extracellular side. A helical membrane pass occupies residues 287 to 303 (MLLVLYYCMLPLMFAMF). Over 304–321 (GSLFRQRMAAWCKTICHC) the chain is Cytoplasmic.

It belongs to the G-protein coupled receptor 1 family.

The protein localises to the host cell membrane. In terms of biological role, may be highly relevant to the process of cellular transformation and rapid T-cell proliferation effected by HVS during latent infections of T-cells in susceptible hosts. In Saimiri sciureus (Common squirrel monkey), this protein is G-protein coupled receptor homolog ECRF3 (74).